We begin with the raw amino-acid sequence, 72 residues long: Candidate secreted effector protein MPL124499 (72 aa).

Positions 1–21 (MKLSIFAAIFMAFVSLNQVFG) are cleaved as a signal peptide.

Belongs to the CPGH1 family.

It localises to the secreted. The protein localises to the host cell. Its subcellular location is the host cytoplasm. The protein resides in the host nucleus. Functionally, rust effector delivered into infected tissues to modulate host functions and contribute to pathogen virulence. Enhances leaf colonization by the bacteria Pseudomonas syringae and the oomycete Hyaloperonospora arabidopsidis pathogens in an Arabidopsis thaliana infection model. The sequence is that of Candidate secreted effector protein MPL124499 from Melampsora larici-populina (strain 98AG31 / pathotype 3-4-7) (Poplar leaf rust fungus).